Consider the following 580-residue polypeptide: Isocitrate lyase (580 aa).

106–108 (SGW) serves as a coordination point for substrate. Position 177 (Asp177) interacts with Mg(2+). Catalysis depends on Cys215, which acts as the Proton acceptor. Substrate-binding positions include 216–217 (GH), Arg252, 441–445 (NLSPS), and Thr476. A Microbody targeting signal motif is present at residues 578–580 (SRM).

This sequence belongs to the isocitrate lyase/PEP mutase superfamily. Isocitrate lyase family. Homotetramer. It depends on Mg(2+) as a cofactor.

Its subcellular location is the glyoxysome. It carries out the reaction D-threo-isocitrate = glyoxylate + succinate. Its pathway is carbohydrate metabolism; glyoxylate cycle; (S)-malate from isocitrate: step 1/2. Functionally, involved in storage lipid mobilization during the growth of higher plant seedling. The protein is Isocitrate lyase (ICL 8) of Pinus taeda (Loblolly pine).